The chain runs to 86 residues: MKILFVIVLAAFFIGVHCKHGYPVQYSGREKGCKIACVINNASCDGECKRRGGRAGYCYFWKLACFCEYLPNNSPTWDYKTGKCRV.

The first 18 residues, 1-18 (MKILFVIVLAAFFIGVHC), serve as a signal peptide directing secretion. The region spanning 19–85 (KHGYPVQYSG…TWDYKTGKCR (67 aa)) is the LCN-type CS-alpha/beta domain. Intrachain disulfides connect Cys-33–Cys-84, Cys-37–Cys-58, Cys-44–Cys-65, and Cys-48–Cys-67.

The protein belongs to the long (4 C-C) scorpion toxin superfamily. Sodium channel inhibitor family. Beta subfamily. Expressed by the venom gland.

The protein resides in the secreted. Its function is as follows. Binds voltage-independently at site-4 of sodium channels (Nav) and shift the voltage of activation toward more negative potentials thereby affecting sodium channel activation and promoting spontaneous and repetitive firing. The chain is Neurotoxin LmNaTx17 from Lychas mucronatus (Chinese swimming scorpion).